A 358-amino-acid chain; its full sequence is 3-isopropylmalate dehydrogenase 2 (358 aa).

74 to 87 (GPKWDKLPAESRPE) contributes to the NAD(+) binding site. Positions 94, 104, 132, and 221 each coordinate substrate. Mg(2+)-binding residues include aspartate 221, aspartate 245, and aspartate 249. 279–291 (GSAPDIAGQGVAN) is a binding site for NAD(+).

This sequence belongs to the isocitrate and isopropylmalate dehydrogenases family. LeuB type 1 subfamily. In terms of assembly, homodimer. Mg(2+) serves as cofactor. Requires Mn(2+) as cofactor.

It localises to the cytoplasm. It carries out the reaction (2R,3S)-3-isopropylmalate + NAD(+) = 4-methyl-2-oxopentanoate + CO2 + NADH. The protein operates within amino-acid biosynthesis; L-leucine biosynthesis; L-leucine from 3-methyl-2-oxobutanoate: step 3/4. Catalyzes the oxidation of 3-carboxy-2-hydroxy-4-methylpentanoate (3-isopropylmalate) to 3-carboxy-4-methyl-2-oxopentanoate. The product decarboxylates to 4-methyl-2 oxopentanoate. In Dechloromonas aromatica (strain RCB), this protein is 3-isopropylmalate dehydrogenase 2.